The chain runs to 251 residues: Coproheme decarboxylase (251 aa).

Fe-coproporphyrin III contacts are provided by residues R133, 147–151 (YPMSK), H174, Q187, and S225. Residue Y147 is part of the active site.

It belongs to the ChdC family. Type 1 subfamily. In terms of assembly, homopentamer. Homohexamer in solution. Fe-coproporphyrin III serves as cofactor.

The enzyme catalyses Fe-coproporphyrin III + 2 H2O2 + 2 H(+) = heme b + 2 CO2 + 4 H2O. The catalysed reaction is Fe-coproporphyrin III + H2O2 + H(+) = harderoheme III + CO2 + 2 H2O. It catalyses the reaction harderoheme III + H2O2 + H(+) = heme b + CO2 + 2 H2O. It functions in the pathway porphyrin-containing compound metabolism; protoheme biosynthesis. Involved in coproporphyrin-dependent heme b biosynthesis. Catalyzes the decarboxylation of Fe-coproporphyrin III (coproheme) to heme b (protoheme IX), the last step of the pathway. The reaction occurs in a stepwise manner with a three-propionate intermediate. The polypeptide is Coproheme decarboxylase (Listeria monocytogenes serovar 1/2a (strain ATCC BAA-679 / EGD-e)).